The chain runs to 372 residues: Adaptive-response sensory kinase SasA (372 aa).

Positions 147–360 (MVAHELRTPL…CFHFTVPVWQ (214 aa)) constitute a Histidine kinase domain. A Phosphohistidine; by autocatalysis modification is found at His150.

As to quaternary structure, homooligomerizes. Interacts with KaiC. Participates in the KaiBC complex, whose core is composed of a KaiC homohexamer and 6 KaiB.

The catalysed reaction is ATP + protein L-histidine = ADP + protein N-phospho-L-histidine.. In terms of biological role, member of the two-component regulatory system SasA/RpaA involved in genome-wide circadian gene expression. One of several clock output pathways. Participates in the Kai clock protein complex, the main circadian regulator in cyanobacteria, via its interaction with KaiC. KaiC enhances the autophosphorylation activity of SasA, which then transfers its phosphate group to RpaA to activate it. In addition to its output function, recruits fold-shifted KaiB (KaiB(fs)) to KaiC to cooperatively form the KaiB(6):KaiC(6) complex (independent of SasA kinase activity). Required for robustness of the circadian rhythm of gene expression and is involved in clock output, also required for adaptation to light/dark cycles. The polypeptide is Adaptive-response sensory kinase SasA (Prochlorococcus marinus (strain MIT 9215)).